A 388-amino-acid chain; its full sequence is Succinyl-diaminopimelate desuccinylase (388 aa).

His-74 is a Zn(2+) binding site. Residue Asp-76 is part of the active site. Asp-107 is a binding site for Zn(2+). Catalysis depends on Glu-142, which acts as the Proton acceptor. Zn(2+) is bound by residues Glu-143, Glu-171, and His-360.

The protein belongs to the peptidase M20A family. DapE subfamily. As to quaternary structure, homodimer. Requires Zn(2+) as cofactor. It depends on Co(2+) as a cofactor.

It carries out the reaction N-succinyl-(2S,6S)-2,6-diaminopimelate + H2O = (2S,6S)-2,6-diaminopimelate + succinate. Its pathway is amino-acid biosynthesis; L-lysine biosynthesis via DAP pathway; LL-2,6-diaminopimelate from (S)-tetrahydrodipicolinate (succinylase route): step 3/3. Catalyzes the hydrolysis of N-succinyl-L,L-diaminopimelic acid (SDAP), forming succinate and LL-2,6-diaminopimelate (DAP), an intermediate involved in the bacterial biosynthesis of lysine and meso-diaminopimelic acid, an essential component of bacterial cell walls. This Rhodopseudomonas palustris (strain BisB5) protein is Succinyl-diaminopimelate desuccinylase.